The following is a 231-amino-acid chain: Uracil-DNA glycosylase (231 aa).

Asp74 functions as the Proton acceptor in the catalytic mechanism.

The protein belongs to the uracil-DNA glycosylase (UDG) superfamily. UNG family.

Its subcellular location is the cytoplasm. The catalysed reaction is Hydrolyzes single-stranded DNA or mismatched double-stranded DNA and polynucleotides, releasing free uracil.. Its function is as follows. Excises uracil residues from the DNA which can arise as a result of misincorporation of dUMP residues by DNA polymerase or due to deamination of cytosine. The chain is Uracil-DNA glycosylase from Campylobacter jejuni (strain RM1221).